The sequence spans 420 residues: Glutamate dehydrogenase (420 aa).

Residue Lys-105 is part of the active site. 220–226 provides a ligand contact to NAD(+); sequence GYGNAGY.

Belongs to the Glu/Leu/Phe/Val dehydrogenases family. Homohexamer.

Its subcellular location is the cytoplasm. It carries out the reaction L-glutamate + NAD(+) + H2O = 2-oxoglutarate + NH4(+) + NADH + H(+). The catalysed reaction is L-glutamate + NADP(+) + H2O = 2-oxoglutarate + NH4(+) + NADPH + H(+). The sequence is that of Glutamate dehydrogenase (gdhA) from Pyrococcus abyssi (strain GE5 / Orsay).